A 153-amino-acid polypeptide reads, in one-letter code: Endoribonuclease YbeY (153 aa).

Zn(2+)-binding residues include histidine 118, histidine 122, and histidine 128.

Belongs to the endoribonuclease YbeY family. Requires Zn(2+) as cofactor.

The protein localises to the cytoplasm. Functionally, single strand-specific metallo-endoribonuclease involved in late-stage 70S ribosome quality control and in maturation of the 3' terminus of the 16S rRNA. In Clostridioides difficile (strain 630) (Peptoclostridium difficile), this protein is Endoribonuclease YbeY.